Here is a 332-residue protein sequence, read N- to C-terminus: 2,3-diketo-L-gulonate reductase (332 aa).

H44 serves as the catalytic Proton donor. NAD(+) contacts are provided by residues 168 to 174, 224 to 225, and 304 to 306; these read ITMVDMS, WK, and GHE.

Belongs to the LDH2/MDH2 oxidoreductase family. DlgD subfamily. Homodimer.

It localises to the cytoplasm. It catalyses the reaction 3-dehydro-L-gulonate + NAD(+) = 2,3-dioxo-L-gulonate + NADH + H(+). It carries out the reaction 3-dehydro-L-gulonate + NADP(+) = 2,3-dioxo-L-gulonate + NADPH + H(+). Its function is as follows. Catalyzes the reduction of 2,3-diketo-L-gulonate in the presence of NADH, to form 3-keto-L-gulonate. This Escherichia coli O139:H28 (strain E24377A / ETEC) protein is 2,3-diketo-L-gulonate reductase.